A 779-amino-acid polypeptide reads, in one-letter code: Probable ATP-dependent RNA helicase DHX40 (779 aa).

Residues 1–53 are disordered; the sequence is MSRFPAVAGRAPRRQEEGERPVELQEERPSAVRIADREEKGCTSQEGGTTPTF. Basic and acidic residues predominate over residues 13-41; sequence RRQEEGERPVELQEERPSAVRIADREEKG. Polar residues predominate over residues 42–53; it reads CTSQEGGTTPTF. Residues 63-231 enclose the Helicase ATP-binding domain; sequence IQAVRDNSFL…FGNCPIFDIP (169 aa). 76–83 provides a ligand contact to ATP; the sequence is GNTGSGKT. The DEAH box signature appears at 173–176; that stretch reads DEAH. In terms of domain architecture, Helicase C-terminal spans 263–442; the sequence is TMDIHLNEMA…SVVLTLKCLA (180 aa).

The protein belongs to the DEAD box helicase family. DEAH subfamily.

It catalyses the reaction ATP + H2O = ADP + phosphate + H(+). Its function is as follows. Probable ATP-dependent RNA helicase. The chain is Probable ATP-dependent RNA helicase DHX40 (Dhx40) from Rattus norvegicus (Rat).